Reading from the N-terminus, the 258-residue chain is Protein UL24 homolog (258 aa).

Belongs to the herpesviridae UL24 family.

The protein resides in the virion. It localises to the host cytoplasm. Its subcellular location is the host nucleus. It is found in the host nucleolus. The protein localises to the host Golgi apparatus. Functionally, may participate in nuclear egress of viral particles. Plays a role in the dispersal of several host nucleolar proteins including NCL/nucleolin and NPM1. Since deletion of host NCL/nucleolin negatively impact on nuclear egress, UL24 supposedly acts on this process through its effect on host nucleoli. This is Protein UL24 homolog from Varicella-zoster virus (strain Dumas) (HHV-3).